The primary structure comprises 325 residues: uncharacterized protein (325 aa).

The N-terminal 69 residues, 1–69 (MAMMTTTTTT…KNRRVSVTVS (69 aa)), are a transit peptide targeting the chloroplast. A70 carries the N-acetylalanine modification.

Belongs to the NAD(P)-dependent epimerase/dehydratase family.

It is found in the plastid. Its subcellular location is the chloroplast. This is an uncharacterized protein from Arabidopsis thaliana (Mouse-ear cress).